The primary structure comprises 406 residues: Tryptophan synthase beta chain (406 aa).

Residue Lys-99 is modified to N6-(pyridoxal phosphate)lysine.

This sequence belongs to the TrpB family. Tetramer of two alpha and two beta chains. The cofactor is pyridoxal 5'-phosphate.

The catalysed reaction is (1S,2R)-1-C-(indol-3-yl)glycerol 3-phosphate + L-serine = D-glyceraldehyde 3-phosphate + L-tryptophan + H2O. It functions in the pathway amino-acid biosynthesis; L-tryptophan biosynthesis; L-tryptophan from chorismate: step 5/5. In terms of biological role, the beta subunit is responsible for the synthesis of L-tryptophan from indole and L-serine. In Allorhizobium ampelinum (strain ATCC BAA-846 / DSM 112012 / S4) (Agrobacterium vitis (strain S4)), this protein is Tryptophan synthase beta chain.